The chain runs to 57 residues: UPF0391 membrane protein RPA3505 (57 aa).

2 consecutive transmembrane segments (helical) span residues 4–24 and 30–50; these read WVVTFLVVALIAGLLGFGGIA and IAKIIFFIAIVLFLVSAVISI.

It belongs to the UPF0391 family.

Its subcellular location is the cell membrane. The polypeptide is UPF0391 membrane protein RPA3505 (Rhodopseudomonas palustris (strain ATCC BAA-98 / CGA009)).